We begin with the raw amino-acid sequence, 102 residues long: Amoebiasin-1 (102 aa).

The BC loop motif lies at 27-32 (NPTTGY). The short motif at 51 to 61 (DQHAPGICGCG) is the DE loop element. The short motif at 85–93 (PWAPNANDR) is the FG loop element.

This sequence belongs to the protease inhibitor I42 family. Monomer. During oxidative conditions, forms homooligomers; disulfide-linked. Interacts with cysteine protease CP2. Interacts with cysteine protease CP5. In terms of processing, during oxidative conditions, cys-39, cys-58 and cys-60 react to form intra- and inter-molecular disulfide bonds resulting in the loss of the protein inhibitory activity.

It is found in the cytoplasm. In terms of biological role, cysteine protease inhibitor. Inhibits cysteine proteases CP1, CP2 and CP5. May protect the cytosol against cysteine proteases released by damaged intracellular vesicles. The polypeptide is Amoebiasin-1 (Entamoeba histolytica (strain ATCC 30459 / HM-1:IMSS / ABRM)).